Reading from the N-terminus, the 659-residue chain is MSLPPEKASELKQLIHQQLSKMDVHGRIREILAETIREELAPDQQHLSTEDLIKALRRRGIIDDVMKELNFVTDSVEQELPSSPKQPICFDRQSTLKKTNIDPTRRYLYLQVLGGKAFLEHLQEPEPLPGQVCSTFTLCLHYRNQRFRSKPVPCACEPDFHDGFLLEVHRESLGDGTRMADSTTMLSISDPIHMVLIKTDIFGETTLVASYFLEWRSVLGSENGVTSLTVELMGVGTESKVSVGILNIKLEMYPPLNQTLSQEVVNTQLALERQKTAEKERLFLVYAKQWWREYLQIRPSHNSRLVKIFAQDENGINRPVCSYVKPLRAGRLLDTPRQAARFVNVLGYERAPVIGGGGKQEQWCTLLAFLCRNKGDCEDHANLLCSLLLGYGLEAFVCVGTKAKGVPHAWVMTCGTDGAITFWESLTGHRYIHKPTNPDEPPVAEQPKPLYPYRTIGCVFNHQMFLGNCQPSDAVETCVFDLNDESKWKPMSEEAIKSVCAPGATTSLPPFPPLCASTIDASVTSNEIEMQLRLLVSEHRKDLGLTTVWEDQLSYLLSPALASYEFERTTSISAGNEEFQDAIRRAVPDGHTFKGFPIHFVYRNARRAFATCLRSPFCEEIICCRGDQVRLAVRVRVFTYPESACAVWIMFACKYRSVL.

2 positions are modified to phosphoserine: Ser-75 and Ser-83.

The protein belongs to the CEP76 family. Interacts with CCP110 and CEP97.

The protein resides in the cytoplasm. Its subcellular location is the cytoskeleton. It localises to the microtubule organizing center. The protein localises to the centrosome. It is found in the centriole. In terms of biological role, centrosomal protein involved in regulation of centriole duplication. Required to limit centriole duplication to once per cell cycle by preventing centriole reduplication. This Homo sapiens (Human) protein is Centrosomal protein of 76 kDa (CEP76).